The following is a 439-amino-acid chain: Arginine biosynthesis bifunctional protein ArgJ, mitochondrial (439 aa).

Residues Thr-175, Lys-201, Thr-212, Glu-301, Asn-434, and Ser-439 each contribute to the substrate site. Residue Thr-212 is the Nucleophile of the active site.

Belongs to the ArgJ family. As to quaternary structure, heterodimer of an alpha and a beta chain. The alpha and beta chains are autoproteolytically processed from a single precursor protein within the mitochondrion.

Its subcellular location is the mitochondrion matrix. It carries out the reaction N(2)-acetyl-L-ornithine + L-glutamate = N-acetyl-L-glutamate + L-ornithine. The catalysed reaction is L-glutamate + acetyl-CoA = N-acetyl-L-glutamate + CoA + H(+). It functions in the pathway amino-acid biosynthesis; L-arginine biosynthesis; L-ornithine and N-acetyl-L-glutamate from L-glutamate and N(2)-acetyl-L-ornithine (cyclic): step 1/1. It participates in amino-acid biosynthesis; L-arginine biosynthesis; N(2)-acetyl-L-ornithine from L-glutamate: step 1/4. Functionally, catalyzes two activities which are involved in the cyclic version of arginine biosynthesis: the synthesis of acetylglutamate from glutamate and acetyl-CoA, and of ornithine by transacetylation between acetylornithine and glutamate. This chain is Arginine biosynthesis bifunctional protein ArgJ, mitochondrial, found in Candida albicans (strain WO-1) (Yeast).